A 478-amino-acid polypeptide reads, in one-letter code: Noelin-3 (478 aa).

The signal sequence occupies residues 1 to 23 (MSPPLLKLGAVLSTMAMISNWMS). 5 N-linked (GlcNAc...) asparagine glycosylation sites follow: asparagine 33, asparagine 95, asparagine 179, asparagine 299, and asparagine 465. Positions 77–217 (CSRDAKSRQL…TRLRDCMKKL (141 aa)) form a coiled coil. In terms of domain architecture, Olfactomedin-like spans 218-470 (TCGKLMKITG…QVLFNVTLFH (253 aa)). A disulfide bond links cysteine 219 and cysteine 401.

As to quaternary structure, peripherally associated with AMPAR complex. AMPAR complex consists of an inner core made of 4 pore-forming GluA/GRIA proteins (GRIA1, GRIA2, GRIA3 and GRIA4) and 4 major auxiliary subunits arranged in a twofold symmetry. One of the two pairs of distinct binding sites is occupied either by CNIH2, CNIH3 or CACNG2, CACNG3. The other harbors CACNG2, CACNG3, CACNG4, CACNG8 or GSG1L. This inner core of AMPAR complex is complemented by outer core constituents binding directly to the GluA/GRIA proteins at sites distinct from the interaction sites of the inner core constituents. Outer core constituents include at least PRRT1, PRRT2, CKAMP44/SHISA9, FRRS1L and NRN1. The proteins of the inner and outer core serve as a platform for other, more peripherally associated AMPAR constituents, including OLFM3. Alone or in combination, these auxiliary subunits control the gating and pharmacology of the AMPAR complex and profoundly impact their biogenesis and protein processing. Homodimer. Interacts with MYOC. Interacts with OLFM2. In terms of tissue distribution, in the eye, expressed in trabecular meshwork and neural retina; in non-ocular tissues, expressed in brain and lung.

It localises to the secreted. Its subcellular location is the synapse. In Homo sapiens (Human), this protein is Noelin-3 (OLFM3).